Reading from the N-terminus, the 596-residue chain is Phosphoprotein (596 aa).

Polar residues-rich tracts occupy residues 1–11 (MENNAKDNQIM), 38–66 (TDSQENTADSNEVNTGNKRLSTTIYQLES), and 74–85 (ENSGSVNENRQL). Disordered stretches follow at residues 1-25 (MENNAKDNQIMDSWEEGSGDKSSDI), 38-196 (TDSQ…ESIS), and 220-352 (KNTR…EEST). The N0 binding stretch occupies residues 33-41 (EFILSTDSQ). The span at 88–97 (SHERATETKN) shows a compositional bias: basic and acidic residues. A compositionally biased stretch (polar residues) spans 127 to 144 (ISRSSPDPNNGTQIQESI). Basic and acidic residues-rich tracts occupy residues 151–168 (EMDKDSAKREMRQSKDVP) and 233–249 (EDDKGIKKGVGKPEDTN). Residues 270–324 (TLKISTTTGESTRPQSGSQGKRITSWNILNSESGSRTESTSQNSQIPTSGKSNTV) show a composition bias toward polar residues. Over residues 331–352 (LESRIKTQKTDGKEREDTEEST) the composition is skewed to basic and acidic residues. The multimerization stretch occupies residues 374 to 441 (LDLYQDKRVV…KMDESHRRLI (68 aa)). Residues 416 to 436 (LNQIQNEILSLKTDLKKMDES) are a coiled coil. Residues 442–475 (ENQKEQLSLITSLISNLKIMTERGGKKDQPENSG) are l protein binding.

Belongs to the respirovirus P protein family. As to quaternary structure, homotetramer. Interacts (via multimerization domain) with polymerase L; this interaction forms the polymerase complex. Interacts (via N-terminus) with N0; this interaction allows P to chaperon N0 before encapsidation and form the N-P complex. Interacts (via C-terminus) with N-RNA template; this interaction positions the polymerase on the template.

In terms of biological role, essential cofactor of the RNA polymerase L that plays a central role in the transcription and replication by forming the polymerase complex with RNA polymerase L and recruiting L to the genomic N-RNA template for RNA synthesis. Also plays a central role in the encapsidation of nascent RNA chains by forming the encapsidation complex with the nucleocapsid protein N (N-P complex). Acts as a chaperone for newly synthesized free N protein, so-called N0, allowing encapsidation of nascent RNA chains during replication. The nucleoprotein protein N prevents excessive phosphorylation of P, which leads to down-regulation of viral transcription/ replication. Participates, together with N, in the formation of viral factories (viroplasms), which are large inclusions in the host cytoplasm where replication takes place. Recruits host PI4KB and remodel the host endoplasmic reticulum membrane to form viral replication factories. The protein is Phosphoprotein (P/V/D) of Bovine parainfluenza 3 virus (BPIV-3).